The following is a 583-amino-acid chain: Phytoene desaturase (583 aa).

The first 20 residues, 1–20, serve as a signal peptide directing secretion; it reads MAPPKHVIIIGAGAGGTATA. The helical transmembrane segment at 531–551 threads the bilayer; sequence IIWFLLIALFAATLVLFIAFP.

Belongs to the carotenoid/retinoid oxidoreductase family. NAD(+) is required as a cofactor.

It is found in the membrane. It catalyses the reaction 15-cis-phytoene + 5 A = all-trans-3,4-didehydrolycopene + 5 AH2. It participates in carotenoid biosynthesis; lycopene biosynthesis. In terms of biological role, phytoene desaturase involved in the carotenoid biosynthesis pathway. Converts phytoene into 3,4-didehydrolycopene via the intermediary of phytofluene, zeta-carotene, neurosporene and lycopene, by introducing up to five double bonds into phytoene. The polypeptide is Phytoene desaturase (carB) (Phycomyces blakesleeanus (strain ATCC 8743b / DSM 1359 / FGSC 10004 / NBRC 33097 / NRRL 1555)).